Reading from the N-terminus, the 116-residue chain is Protein Rev (116 aa).

Ser-5 carries the post-translational modification Phosphoserine; by host CK2. Positions 18-26 (LIKILYQSN) are homomultimerization. The interval 23-49 (YQSNPPPSPEGTRQARRNRRRRWRARQ) is disordered. A Nuclear localization signal and RNA-binding (RRE) motif is present at residues 34 to 50 (TRQARRNRRRRWRARQR). The span at 36 to 49 (QARRNRRRRWRARQ) shows a compositional bias: basic residues. Residues 73 to 84 (LQLPPLERLNLN) carry the Nuclear export signal and binding to XPO1 motif. The interval 86 to 116 (SEDCGTSGTQGVGSPQISVESPTVLESGTEE) is disordered. Ser-92 and Ser-99 each carry phosphoserine; by host.

This sequence belongs to the HIV-1 REV protein family. As to quaternary structure, homomultimer; when bound to the RRE. Multimeric assembly is essential for activity and may involve XPO1. Binds to human KPNB1, XPO1, TNPO1, RANBP5 and IPO7. Interacts with the viral Integrase. Interacts with human KHDRBS1. Interacts with human NAP1; this interaction decreases Rev multimerization and stimulates its activity. Interacts with human DEAD-box helicases DDX3 and DDX24; these interactions may serve for viral RNA export to the cytoplasm and packaging, respectively. Interacts with human PSIP1; this interaction may inhibit HIV-1 DNA integration by promoting dissociation of the Integrase-LEDGF/p75 complex. Asymmetrically arginine dimethylated at one site by host PRMT6. Methylation impairs the RNA-binding activity and export of viral RNA from the nucleus to the cytoplasm. Post-translationally, phosphorylated by protein kinase CK2. Presence of, and maybe binding to the N-terminus of the regulatory beta subunit of CK2 is necessary for CK2-mediated Rev's phosphorylation.

It is found in the host nucleus. The protein resides in the host nucleolus. Its subcellular location is the host cytoplasm. In terms of biological role, escorts unspliced or incompletely spliced viral pre-mRNAs (late transcripts) out of the nucleus of infected cells. These pre-mRNAs carry a recognition sequence called Rev responsive element (RRE) located in the env gene, that is not present in fully spliced viral mRNAs (early transcripts). This function is essential since most viral proteins are translated from unspliced or partially spliced pre-mRNAs which cannot exit the nucleus by the pathway used by fully processed cellular mRNAs. Rev itself is translated from a fully spliced mRNA that readily exits the nucleus. Rev's nuclear localization signal (NLS) binds directly to KPNB1/Importin beta-1 without previous binding to KPNA1/Importin alpha-1. KPNB1 binds to the GDP bound form of RAN (Ran-GDP) and targets Rev to the nucleus. In the nucleus, the conversion from Ran-GDP to Ran-GTP dissociates Rev from KPNB1 and allows Rev's binding to the RRE in viral pre-mRNAs. Rev multimerization on the RRE via cooperative assembly exposes its nuclear export signal (NES) to the surface. Rev can then form a complex with XPO1/CRM1 and Ran-GTP, leading to nuclear export of the complex. Conversion from Ran-GTP to Ran-GDP mediates dissociation of the Rev/RRE/XPO1/RAN complex, so that Rev can return to the nucleus for a subsequent round of export. Beside KPNB1, also seems to interact with TNPO1/Transportin-1, RANBP5/IPO5 and IPO7/RANBP7 for nuclear import. The nucleoporin-like HRB/RIP is an essential cofactor that probably indirectly interacts with Rev to release HIV RNAs from the perinuclear region to the cytoplasm. The protein is Protein Rev of Homo sapiens (Human).